The chain runs to 369 residues: Aminomethyltransferase (369 aa).

Belongs to the GcvT family. In terms of assembly, the glycine cleavage system is composed of four proteins: P, T, L and H.

It catalyses the reaction N(6)-[(R)-S(8)-aminomethyldihydrolipoyl]-L-lysyl-[protein] + (6S)-5,6,7,8-tetrahydrofolate = N(6)-[(R)-dihydrolipoyl]-L-lysyl-[protein] + (6R)-5,10-methylene-5,6,7,8-tetrahydrofolate + NH4(+). In terms of biological role, the glycine cleavage system catalyzes the degradation of glycine. The sequence is that of Aminomethyltransferase from Synechococcus sp. (strain CC9311).